Consider the following 729-residue polypeptide: Polyphosphate kinase (729 aa).

A disordered region spans residues methionine 1 to proline 46. Residues threonine 25–alanine 42 are compositionally biased toward low complexity. Asparagine 90 contributes to the ATP binding site. Mg(2+) contacts are provided by arginine 422 and arginine 452. Histidine 482 functions as the Phosphohistidine intermediate in the catalytic mechanism. ATP is bound by residues tyrosine 515, arginine 611, and histidine 639.

The protein belongs to the polyphosphate kinase 1 (PPK1) family. Mg(2+) is required as a cofactor. In terms of processing, an intermediate of this reaction is the autophosphorylated ppk in which a phosphate is covalently linked to a histidine residue through a N-P bond.

It carries out the reaction [phosphate](n) + ATP = [phosphate](n+1) + ADP. In terms of biological role, catalyzes the reversible transfer of the terminal phosphate of ATP to form a long-chain polyphosphate (polyP). In Mycolicibacterium gilvum (strain PYR-GCK) (Mycobacterium gilvum (strain PYR-GCK)), this protein is Polyphosphate kinase.